The primary structure comprises 867 residues: Nuclear cap-binding protein subunit 1 (867 aa).

Residues 9–228 form the MIF4G domain; the sequence is LLRIGDRCPE…DLWERIQVLS (220 aa). A disordered region spans residues 752–797; it reads SADGDVPNLRAGDPNVNSSARDPEATTMEIDNENGGDNDSQLNGQN. Positions 788-797 are enriched in polar residues; it reads DNDSQLNGQN.

The protein belongs to the NCBP1 family. As to quaternary structure, component of the nuclear cap-binding complex (CBC), a heterodimer composed of ABH1/CBP80 and CBP20 that interacts with m7GpppG-capped RNA.

Its subcellular location is the nucleus. The protein localises to the cytoplasm. Component of the cap-binding complex (CBC), which binds cotranscriptionally to the 5'-cap of pre-mRNAs and is involved in various processes such as pre-mRNA splicing and RNA-mediated gene silencing (RNAi) by microRNAs (miRNAs). The CBC complex is involved in miRNA-mediated RNA interference and is required for primary miRNA processing. In the CBC complex, ABH1/CBP80 does not bind directly capped RNAs (m7GpppG-capped RNA) but is required to stabilize the movement of the N-terminal loop of CBP20 and lock the CBC into a high affinity cap-binding state with the cap structure. This Oryza sativa subsp. japonica (Rice) protein is Nuclear cap-binding protein subunit 1 (ABH1).